Reading from the N-terminus, the 111-residue chain is Cytochrome c (111 aa).

N-acetylalanine is present on A1. Positions 22, 25, and 26 each coordinate heme c. Residue K80 is modified to N6,N6,N6-trimethyllysine. M88 contacts heme c. Position 94 is an N6,N6,N6-trimethyllysine (K94).

This sequence belongs to the cytochrome c family. Binds 1 heme c group covalently per subunit.

It is found in the mitochondrion intermembrane space. Functionally, electron carrier protein. The oxidized form of the cytochrome c heme group can accept an electron from the heme group of the cytochrome c1 subunit of cytochrome reductase. Cytochrome c then transfers this electron to the cytochrome oxidase complex, the final protein carrier in the mitochondrial electron-transport chain. This chain is Cytochrome c, found in Cannabis sativa (Hemp).